The following is a 141-amino-acid chain: ATP synthase epsilon chain (141 aa).

This sequence belongs to the ATPase epsilon chain family. F-type ATPases have 2 components, CF(1) - the catalytic core - and CF(0) - the membrane proton channel. CF(1) has five subunits: alpha(3), beta(3), gamma(1), delta(1), epsilon(1). CF(0) has three main subunits: a, b and c.

It localises to the cell inner membrane. In terms of biological role, produces ATP from ADP in the presence of a proton gradient across the membrane. This chain is ATP synthase epsilon chain, found in Methylobacillus flagellatus (strain ATCC 51484 / DSM 6875 / VKM B-1610 / KT).